The primary structure comprises 47 residues: Putative heat shock protein HSP90 (47 aa).

Arginine 47 lines the ATP pocket.

It belongs to the heat shock protein 90 family. In terms of assembly, homodimer.

Its subcellular location is the cytoplasm. Putative molecular chaperone that may promote the maturation, structural maintenance and proper regulation of specific target proteins. This is Putative heat shock protein HSP90 from Populus euphratica (Euphrates poplar).